The chain runs to 408 residues: CinA-like protein (408 aa).

It belongs to the CinA family.

In Fervidobacterium nodosum (strain ATCC 35602 / DSM 5306 / Rt17-B1), this protein is CinA-like protein.